Here is a 295-residue protein sequence, read N- to C-terminus: Ethanolamine ammonia-lyase small subunit (295 aa).

Adenosylcob(III)alamin is bound by residues valine 208 and glutamate 229.

It belongs to the EutC family. In terms of assembly, the basic unit is a heterodimer which dimerizes to form tetramers. The heterotetramers trimerize; 6 large subunits form a core ring with 6 small subunits projecting outwards. Requires adenosylcob(III)alamin as cofactor.

It localises to the bacterial microcompartment. It carries out the reaction ethanolamine = acetaldehyde + NH4(+). The protein operates within amine and polyamine degradation; ethanolamine degradation. Catalyzes the deamination of various vicinal amino-alcohols to oxo compounds. Allows this organism to utilize ethanolamine as the sole source of nitrogen and carbon in the presence of external vitamin B12. The polypeptide is Ethanolamine ammonia-lyase small subunit (Fusobacterium nucleatum subsp. nucleatum (strain ATCC 25586 / DSM 15643 / BCRC 10681 / CIP 101130 / JCM 8532 / KCTC 2640 / LMG 13131 / VPI 4355)).